The chain runs to 265 residues: Regulator of calcineurin 2 (265 aa).

Phosphoserine occurs at positions 104 and 110. Disordered regions lie at residues 127 to 213 (LLSI…DKSA) and 242 to 265 (ENDV…EFFH). Thr132 carries the post-translational modification Phosphothreonine. Low complexity-rich tracts occupy residues 141–161 (SSSL…LESP) and 182–202 (LSRS…QTSL). Ser152, Ser157, Ser160, Ser183, Ser187, Ser193, Ser201, and Ser255 each carry phosphoserine.

Phosphorylation of Ser-152 and Ser-160 is induced 2-fold in response to mating pheromone.

Its subcellular location is the cytoplasm. This is Regulator of calcineurin 2 (RCN2) from Saccharomyces cerevisiae (strain ATCC 204508 / S288c) (Baker's yeast).